Reading from the N-terminus, the 368-residue chain is Quinolinate synthase (368 aa).

Iminosuccinate is bound by residues His46 and Ser63. Residue Cys110 coordinates [4Fe-4S] cluster. Iminosuccinate contacts are provided by residues 141–143 (YVN) and Ser162. Position 230 (Cys230) interacts with [4Fe-4S] cluster. Residues 256–258 (HPE) and Thr273 each bind iminosuccinate. Cys320 contacts [4Fe-4S] cluster.

This sequence belongs to the quinolinate synthase family. Type 3 subfamily. It depends on [4Fe-4S] cluster as a cofactor.

The protein localises to the cytoplasm. It carries out the reaction iminosuccinate + dihydroxyacetone phosphate = quinolinate + phosphate + 2 H2O + H(+). It functions in the pathway cofactor biosynthesis; NAD(+) biosynthesis; quinolinate from iminoaspartate: step 1/1. In terms of biological role, catalyzes the condensation of iminoaspartate with dihydroxyacetone phosphate to form quinolinate. The protein is Quinolinate synthase of Bacillus cereus (strain G9842).